The chain runs to 160 residues: Putative 4-hydroxy-4-methyl-2-oxoglutarate aldolase (160 aa).

Residues 76–79 (GGNL) and Arg-98 contribute to the substrate site. Residue Asp-99 coordinates a divalent metal cation.

Belongs to the class II aldolase/RraA-like family. As to quaternary structure, homotrimer. A divalent metal cation serves as cofactor.

The enzyme catalyses 4-hydroxy-4-methyl-2-oxoglutarate = 2 pyruvate. The catalysed reaction is oxaloacetate + H(+) = pyruvate + CO2. In terms of biological role, catalyzes the aldol cleavage of 4-hydroxy-4-methyl-2-oxoglutarate (HMG) into 2 molecules of pyruvate. Also contains a secondary oxaloacetate (OAA) decarboxylase activity due to the common pyruvate enolate transition state formed following C-C bond cleavage in the retro-aldol and decarboxylation reactions. The sequence is that of Putative 4-hydroxy-4-methyl-2-oxoglutarate aldolase from Deinococcus radiodurans (strain ATCC 13939 / DSM 20539 / JCM 16871 / CCUG 27074 / LMG 4051 / NBRC 15346 / NCIMB 9279 / VKM B-1422 / R1).